We begin with the raw amino-acid sequence, 185 residues long: Ribosome-recycling factor (185 aa).

This sequence belongs to the RRF family.

Its subcellular location is the cytoplasm. In terms of biological role, responsible for the release of ribosomes from messenger RNA at the termination of protein biosynthesis. May increase the efficiency of translation by recycling ribosomes from one round of translation to another. In Streptococcus suis (strain 98HAH33), this protein is Ribosome-recycling factor.